The primary structure comprises 513 residues: Acyltransferase uat1 (513 aa).

The Proton acceptor role is filled by His158.

Belongs to the plant acyltransferase family.

The protein operates within secondary metabolite biosynthesis. In terms of biological role, acyltransferase; part of the gene cluster that mediates the biosynthesis of the glycolipid biosurfactant ustilagic acid (UA). UA is a secreted cellobiose glycolipid that is toxic for many microorganisms and confers biocontrol activity to U.maydis. UA consists of 15,16-dihydroxypalmitic or 2,15,16-trihydroxypalmitic acid, which is O-glycosidically linked to cellobiose at its terminal hydroxyl group. In addition, the cellobiose moiety is acetylated and acylated with a short-chain hydroxy fatty acid. UA biosynthesis starts with omega-hydroxylation of palmitic acid catalyzed by the cytochrome P450 monooxygenase cyp1. Terminal hydroxylation of palmitic acid precedes subterminal hydroxylation catalyzed by the cytochrome P450 monooxygenase cyp2. Sequential glucosylation of the hydroxy fatty acid is probably catalyzed by the glycosyltransferase ugt1. The cellobiose lipid is further decorated by acetylation of the proximal glucose residue and by acylation with a short-chain beta-hydroxy fatty acid at the distal glucose residue. The acyltransferase uat1 may be a good candidate for catalyzing either acetylation or acylation of the cellobiose lipid. The fatty acid synthase fas2 may be involved in synthesis of the carbon backbone of the short-chain beta-hydroxy fatty acid esterified to the cellobiose disaccharide. The secreted UA consists of a mixture of both alpha-hydroxylated and non-hydroxylated glycolipids; therefore, alpha-hydroxylation of the long-chain fatty, catalyzed by the fatty acid hydroxylase ahd1, occurs late in UA biosynthesis and may be the last step before secretion. This chain is Acyltransferase uat1, found in Mycosarcoma maydis (Corn smut fungus).